Consider the following 292-residue polypeptide: Elongation factor Ts (292 aa).

An involved in Mg(2+) ion dislocation from EF-Tu region spans residues 80 to 83; it reads TDFV.

It belongs to the EF-Ts family.

It localises to the cytoplasm. In terms of biological role, associates with the EF-Tu.GDP complex and induces the exchange of GDP to GTP. It remains bound to the aminoacyl-tRNA.EF-Tu.GTP complex up to the GTP hydrolysis stage on the ribosome. The chain is Elongation factor Ts from Pediococcus pentosaceus (strain ATCC 25745 / CCUG 21536 / LMG 10740 / 183-1w).